We begin with the raw amino-acid sequence, 805 residues long: Kinesin-like protein Klp10A (805 aa).

Residues 1–274 are globular; that stretch reads MDMITVGQSV…FVPLLDGQAV (274 aa). 2 disordered regions span residues 68–94 and 117–211; these read QHAA…SAIG and IPNP…RRSH. Residues 80–94 show a composition bias toward polar residues; that stretch reads APMNLSRNPTQSAIG. The span at 123–136 shows a compositional bias: low complexity; the sequence is SSNSVNTNSNSNTT. Serine 157 bears the Phosphoserine mark. The segment covering 158–179 has biased composition (polar residues); the sequence is QAATGQQQTRIASAVPNNTLPN. A compositionally biased stretch (low complexity) spans 180-200; it reads PSAAASAGPAAQGVATAATTQ. A coiled-coil region spans residues 205–244; sequence ASTRRSHALKEVERLKENREKRRARQAEMKEEKVALMNQD. The Kinesin motor domain occupies 278-610; the sequence is QITVCVRKRP…LRYADRVKEL (333 aa). ATP is bound at residue 368–375; that stretch reads GQTGSGKT. A Phosphothreonine modification is found at threonine 630. A disordered region spans residues 633–688; the sequence is EEEEELNMVHPHSHQLHPNSHAPASQSNNQRAPASHHSGAVIHNNNNNNNKNGNAG. A compositionally biased stretch (polar residues) spans 648–664; sequence LHPNSHAPASQSNNQRA. Low complexity predominate over residues 676–688; that stretch reads NNNNNNNKNGNAG. Serine 795, serine 797, and serine 800 each carry phosphoserine.

Belongs to the TRAFAC class myosin-kinesin ATPase superfamily. Kinesin family. MCAK/KIF2 subfamily. Interacts with Alms1a (via C-terminus). Expressed in male germline stem cells and spermatogonia (at protein level).

The protein localises to the cytoplasm. It localises to the cytoskeleton. Its subcellular location is the microtubule organizing center. It is found in the centrosome. The protein resides in the spindle pole. The protein localises to the chromosome. It localises to the centromere. In terms of biological role, required during anaphase to drive sister chromatid separation to promote flux by actively depolymerizing kinetochore microtubules at their pole-associated minus ends, thereby moving chromatids through a 'poleward flux'. Involved in asymmetric cell division of sensory organ precursor (SOP) cells by playing a role in the asymmetric localization of Sara-expressing endosomes to the pIIa daughter cell but not to the pIIb cell. Klp98A targets Sara-expressing endosomes to the central spindle which is symmetrically arranged in early cell division. During late cytokinesis, central spindle asymmetry is generated by enrichment of Patronin on the pIIb side which protects microtubules from depolymerization by Klp10A while unprotected microtubules on the pIIa side are disassembled by Klp10A, leading to the asymmetric delivery of Sara-expressing endosomes to the pIIa daughter cell. This is Kinesin-like protein Klp10A from Drosophila melanogaster (Fruit fly).